Consider the following 339-residue polypeptide: Phenylalanine--tRNA ligase alpha subunit (339 aa).

A Mg(2+)-binding site is contributed by E254.

This sequence belongs to the class-II aminoacyl-tRNA synthetase family. Phe-tRNA synthetase alpha subunit type 1 subfamily. As to quaternary structure, tetramer of two alpha and two beta subunits. Mg(2+) serves as cofactor.

It localises to the cytoplasm. The catalysed reaction is tRNA(Phe) + L-phenylalanine + ATP = L-phenylalanyl-tRNA(Phe) + AMP + diphosphate + H(+). This Clostridium perfringens (strain ATCC 13124 / DSM 756 / JCM 1290 / NCIMB 6125 / NCTC 8237 / Type A) protein is Phenylalanine--tRNA ligase alpha subunit.